A 413-amino-acid polypeptide reads, in one-letter code: MASKSLVVLSACIIIGSAVPVEKLPVLKSQPAEVLFRESQPTVLECIIEGQEEGVKYTWTKDGKDFKWTEHNAAQRTNEGSLVFLSPQPSDEGHYQCFAQTAAGVASSRVISFKRTYLVAEPAKTHEKTPVEGKPFQLDCVIPNAYPKPEIFWKKSLSGADPNADSANLGRRVTAGPDGNLYFTTVEKEDVSDIYKYVCVAKSPAHDGEVRLVEYIIKEVTKDTSGYKGELVPQYLSKDIVAKVGSVTMIYCMYGGKPQGFPDYFKDGKDVNGDAGGRITRHNRTSGKRLLIKETLLEDQGTYTCEESNGVGKPVKHSLKVTVVSAPKYVKSPEKVIIAKQGQDVTIPCQVTGLPAPKVTWTHNAQPLSGGKTTVTESGLIIKGLQKGDKGYYGCRSTNEHGDEYVETLVQVN.

A signal peptide spans 1 to 18 (MASKSLVVLSACIIIGSA). Ig-like C2-type domains follow at residues 25–112 (PVLK…RVIS), 122–211 (PAKT…GEVR), 233–322 (PQYL…LKVT), and 327–413 (PKYV…VQVN). Cystine bridges form between Cys-46/Cys-97, Cys-140/Cys-199, Cys-252/Cys-305, and Cys-349/Cys-395. Residue Asn-283 is glycosylated (N-linked (GlcNAc...) asparagine).

The protein belongs to the hemolin family. In terms of tissue distribution, expressed in larval bristles.

The protein resides in the secreted. With respect to regulation, increased activity in presence of phospholipids (low concentrations) and calcium ions. Inhibited by PMSF. Not affected by EDTA and E-64. Functionally, bristle toxin involved in caterpillar defense by participating in hemorrhagic syndrome characterized by a consumptive coagulopathy. Exhibits procoagulant activity through selective factor X proteolytic activation. Activates factor X in a dose- and time-dependent manner but does not activate gamma-carboxyglutamic acid domainless factor X. Its activity does not depend on calcium ions. Also functions as a growth stimulator and an inhibitor of cellular death for endothelial cells. In vitro, increases proliferation of human umbilical vein endothelial cells (HUVEC) and inhibits the apoptosis induced by starvation. Also increases slightly the complement decay-accelerating factor (CD55), which protects cells from complement-mediated lysis. On the other hand, does not alter the release or expression of von Willebrand factor (VWF), tissue factor (F3), intercellular adhesion molecule-1 (ICAM1), interleukin-8 (CXCL8), and prostacyclin. Does not show fibrinolytic or fibrinogenolytic activities. In Lonomia obliqua (Moth), this protein is Hemolin.